The following is a 355-amino-acid chain: Ribosomal RNA small subunit methyltransferase H (355 aa).

S-adenosyl-L-methionine is bound by residues 55–57 (GGH), Asp-75, Asp-122, and Gln-129. The disordered stretch occupies residues 327 to 355 (ERTSQPLPATGAEDFVPAVPGAAEKGRRR).

This sequence belongs to the methyltransferase superfamily. RsmH family.

The protein localises to the cytoplasm. The catalysed reaction is cytidine(1402) in 16S rRNA + S-adenosyl-L-methionine = N(4)-methylcytidine(1402) in 16S rRNA + S-adenosyl-L-homocysteine + H(+). Functionally, specifically methylates the N4 position of cytidine in position 1402 (C1402) of 16S rRNA. The chain is Ribosomal RNA small subunit methyltransferase H from Bordetella avium (strain 197N).